The chain runs to 1318 residues: Meiotically up-regulated gene 79 protein (1318 aa).

Disordered stretches follow at residues 177 to 198, 208 to 227, and 360 to 387; these read PVNS…SGSY, EEEL…IVVT, and PQAL…PPKG. Low complexity predominate over residues 364–384; it reads AAAESPTTKAPTTKAPTSEAP. Positions 1049-1158 constitute a PH domain; it reads MISYKKMVLS…WIHSLNFNAA (110 aa).

It localises to the nucleus. Appears to have a role in sporulation. This Schizosaccharomyces pombe (strain 972 / ATCC 24843) (Fission yeast) protein is Meiotically up-regulated gene 79 protein (mug79).